The chain runs to 324 residues: Homoserine kinase (324 aa).

Position 87 to 97 (87 to 97) interacts with ATP; the sequence is PVARGMGSSAA.

The protein belongs to the GHMP kinase family. Homoserine kinase subfamily.

The protein resides in the cytoplasm. The catalysed reaction is L-homoserine + ATP = O-phospho-L-homoserine + ADP + H(+). It functions in the pathway amino-acid biosynthesis; L-threonine biosynthesis; L-threonine from L-aspartate: step 4/5. Functionally, catalyzes the ATP-dependent phosphorylation of L-homoserine to L-homoserine phosphate. The protein is Homoserine kinase of Symbiobacterium thermophilum (strain DSM 24528 / JCM 14929 / IAM 14863 / T).